The following is a 764-amino-acid chain: 1,4-alpha-glucan branching enzyme GlgB (764 aa).

D431 serves as the catalytic Nucleophile. E484 acts as the Proton donor in catalysis.

This sequence belongs to the glycosyl hydrolase 13 family. GlgB subfamily. Monomer.

The catalysed reaction is Transfers a segment of a (1-&gt;4)-alpha-D-glucan chain to a primary hydroxy group in a similar glucan chain.. It participates in glycan biosynthesis; glycogen biosynthesis. In terms of biological role, catalyzes the formation of the alpha-1,6-glucosidic linkages in glycogen by scission of a 1,4-alpha-linked oligosaccharide from growing alpha-1,4-glucan chains and the subsequent attachment of the oligosaccharide to the alpha-1,6 position. In Synechococcus sp. (strain CC9902), this protein is 1,4-alpha-glucan branching enzyme GlgB.